The sequence spans 81 residues: Short neurotoxin 1 (81 aa).

The first 21 residues, 1-21, serve as a signal peptide directing secretion; sequence MKTLLLTLVVVTIVCLDLGYT. Cystine bridges form between cysteine 24–cysteine 43, cysteine 38–cysteine 60, cysteine 62–cysteine 73, and cysteine 74–cysteine 79.

It belongs to the three-finger toxin family. Short-chain subfamily. Type I alpha-neurotoxin sub-subfamily. Expressed by the venom gland.

The protein localises to the secreted. In terms of biological role, binds to muscle nicotinic acetylcholine receptor (nAChR) and inhibit acetylcholine from binding to the receptor, thereby impairing neuromuscular transmission. The polypeptide is Short neurotoxin 1 (Tropidechis carinatus (Australian rough-scaled snake)).